We begin with the raw amino-acid sequence, 327 residues long: Beta-1,4-galactosyltransferase 7 (327 aa).

Topologically, residues methionine 1–serine 30 are cytoplasmic. The chain crosses the membrane as a helical; Signal-anchor for type II membrane protein span at residues valine 31–leucine 51. At serine 52–serine 327 the chain is on the lumenal side. The interval glycine 63–aspartate 87 is disordered. Residues proline 100–arginine 104 and phenylalanine 139–arginine 141 each bind UDP-alpha-D-galactose. An N-linked (GlcNAc...) asparagine glycan is attached at asparagine 154. UDP-alpha-D-galactose is bound by residues valine 164–aspartate 165, tyrosine 194, and tryptophan 224. Position 165 (aspartate 165) interacts with Mn(2+). Arginine 226 to aspartate 229 serves as a coordination point for N-acetyl-D-glucosamine. Histidine 257 lines the Mn(2+) pocket. Residues histidine 257–histidine 259 and arginine 266 contribute to the UDP-alpha-D-galactose site. Residues cysteine 316 and cysteine 324 are joined by a disulfide bond.

This sequence belongs to the glycosyltransferase 7 family. Requires Mn(2+) as cofactor. As to expression, high expression in heart, pancreas and liver, medium in placenta and kidney, low in brain, skeletal muscle and lung.

It localises to the golgi apparatus. The protein resides in the golgi stack membrane. It carries out the reaction 3-O-(beta-D-xylosyl)-L-seryl-[protein] + UDP-alpha-D-galactose = 3-O-(beta-D-galactosyl-(1-&gt;4)-beta-D-xylosyl)-L-seryl-[protein] + UDP + H(+). Its pathway is protein modification; protein glycosylation. In terms of biological role, required for the biosynthesis of the tetrasaccharide linkage region of proteoglycans, especially for small proteoglycans in skin fibroblasts. This Homo sapiens (Human) protein is Beta-1,4-galactosyltransferase 7 (B4GALT7).